The primary structure comprises 379 residues: Protein trichome birefringence-like 36 (379 aa).

A helical; Signal-anchor for type II membrane protein transmembrane segment spans residues 8 to 24; sequence VLFLSLCLILGKVVLSQ. A GDS motif motif is present at residues 123 to 125; sequence GDS. The DCXHWCLPGXXDXWN motif signature appears at 353 to 367; it reads DCSHWCLPGVPDIWN.

The protein belongs to the PC-esterase family. TBL subfamily.

The protein localises to the membrane. In terms of biological role, may act as a bridging protein that binds pectin and other cell wall polysaccharides. Probably involved in maintaining esterification of pectins. May be involved in the specific O-acetylation of cell wall polymers. The chain is Protein trichome birefringence-like 36 (TBL36) from Arabidopsis thaliana (Mouse-ear cress).